The sequence spans 1374 residues: DNA-directed RNA polymerase subunit beta' (1374 aa).

The Zn(2+) site is built by C71, C73, C86, and C89. Residues D462, D464, and D466 each contribute to the Mg(2+) site. C810, C884, C891, and C894 together coordinate Zn(2+).

Belongs to the RNA polymerase beta' chain family. As to quaternary structure, the RNAP catalytic core consists of 2 alpha, 1 beta, 1 beta' and 1 omega subunit. When a sigma factor is associated with the core the holoenzyme is formed, which can initiate transcription. Mg(2+) serves as cofactor. Requires Zn(2+) as cofactor.

It catalyses the reaction RNA(n) + a ribonucleoside 5'-triphosphate = RNA(n+1) + diphosphate. Its function is as follows. DNA-dependent RNA polymerase catalyzes the transcription of DNA into RNA using the four ribonucleoside triphosphates as substrates. This is DNA-directed RNA polymerase subunit beta' from Rickettsia massiliae (strain Mtu5).